The following is a 190-amino-acid chain: Protein GrpE (190 aa).

Positions 1 to 18 are enriched in polar residues; that stretch reads MTETPNTSSEEIQTSEPS. A disordered region spans residues 1-21; the sequence is MTETPNTSSEEIQTSEPSPDN.

Belongs to the GrpE family. As to quaternary structure, homodimer.

It localises to the cytoplasm. Its function is as follows. Participates actively in the response to hyperosmotic and heat shock by preventing the aggregation of stress-denatured proteins, in association with DnaK and GrpE. It is the nucleotide exchange factor for DnaK and may function as a thermosensor. Unfolded proteins bind initially to DnaJ; upon interaction with the DnaJ-bound protein, DnaK hydrolyzes its bound ATP, resulting in the formation of a stable complex. GrpE releases ADP from DnaK; ATP binding to DnaK triggers the release of the substrate protein, thus completing the reaction cycle. Several rounds of ATP-dependent interactions between DnaJ, DnaK and GrpE are required for fully efficient folding. This Chlamydia trachomatis serovar L2 (strain ATCC VR-902B / DSM 19102 / 434/Bu) protein is Protein GrpE.